A 338-amino-acid chain; its full sequence is Phytanoyl-CoA dioxygenase, peroxisomal (338 aa).

The transit peptide at 1–30 (MEQLRAAARLQIVLGHLGRPSAGAVVAHPT) directs the protein to the peroxisome. N6-succinyllysine occurs at positions 59 and 108. Residues lysine 120, methionine 157, 175 to 177 (HQD), and tryptophan 193 each bind 2-oxoglutarate. Histidine 175 and aspartate 177 together coordinate Fe cation. Residues lysine 231 and lysine 252 each carry the N6-succinyllysine modification. Histidine 264 is a binding site for Fe cation. 2 residues coordinate 2-oxoglutarate: serine 266 and arginine 275. Position 317 is a phosphoserine (serine 317).

Belongs to the PhyH family. In terms of assembly, interacts with FKBP52. Interacts with PHYHIP. Requires Fe cation as cofactor. L-ascorbate is required as a cofactor. The cofactor is ATP. It depends on Mg(2+) as a cofactor. As to expression, expressed in liver, kidney, and T-cells, but not in spleen, brain, heart, lung and skeletal muscle.

It localises to the peroxisome. The catalysed reaction is phytanoyl-CoA + 2-oxoglutarate + O2 = 2-hydroxyphytanoyl-CoA + succinate + CO2. The enzyme catalyses 3-methylhexadecanoyl-CoA + 2-oxoglutarate + O2 = 2-hydroxy-3-methylhexadecanoyl-CoA + succinate + CO2. It catalyses the reaction hexadecanoyl-CoA + 2-oxoglutarate + O2 = 2-hydroxyhexadecanoyl-CoA + succinate + CO2. It carries out the reaction octanoyl-CoA + 2-oxoglutarate + O2 = 2-hydroxyoctanoyl-CoA + succinate + CO2. The catalysed reaction is decanoyl-CoA + 2-oxoglutarate + O2 = 2-hydroxydecanoyl-CoA + succinate + CO2. The enzyme catalyses 3-methylbutanoyl-CoA + 2-oxoglutarate + O2 = 2-hydroxy-3-methylbutanoyl-CoA + succinate + CO2. It catalyses the reaction heptadecanoyl-CoA + 2-oxoglutarate + O2 = 2-hydroxyheptadecanoyl-CoA + succinate + CO2. It carries out the reaction eicosanoyl-CoA + 2-oxoglutarate + O2 = 2-hydroxyeicosanoyl-CoA + succinate + CO2. The catalysed reaction is octadecanoyl-CoA + 2-oxoglutarate + O2 = 2-hydroxyoctadecanoyl-CoA + succinate + CO2. The enzyme catalyses dodecanoyl-CoA + 2-oxoglutarate + O2 = 2-hydroxydodecanoyl-CoA + succinate + CO2. It catalyses the reaction tetradecanoyl-CoA + 2-oxoglutarate + O2 = 2-hydroxytetradecanoyl-CoA + succinate + CO2. It carries out the reaction hexanoyl-CoA + 2-oxoglutarate + O2 = 2-hydroxyhexanoyl-CoA + succinate + CO2. The catalysed reaction is butanoyl-CoA + 2-oxoglutarate + O2 = 2-hydroxybutanoyl-CoA + succinate + CO2. The enzyme catalyses 3-methylnonanoyl-CoA + 2-oxoglutarate + O2 = 2-hydroxy-3-methylnonanoyl-CoA + succinate + CO2. It catalyses the reaction 3-methylundecanoyl-CoA + 2-oxoglutarate + O2 = 2-hydroxy-3-methylundecanoyl-CoA + succinate + CO2. It carries out the reaction 3-methyldodecanoyl-CoA + 2-oxoglutarate + O2 = 2-hydroxy-3-methyldodecanoyl-CoA + succinate + CO2. Its pathway is lipid metabolism; fatty acid metabolism. Functionally, catalyzes the 2-hydroxylation of not only racemic phytanoyl-CoA and the isomers of 3-methylhexadecanoyl-CoA, but also a variety of other mono-branched 3-methylacyl-CoA esters (with a chain length of at least seven carbon atoms) and straight-chain acyl-CoA esters (with a chain length longer than four carbon atoms). Does not hydroxylate long and very long straight chain acyl-CoAs or 2-methyl- and 4-methyl-branched acyl-CoAs. The chain is Phytanoyl-CoA dioxygenase, peroxisomal (PHYH) from Homo sapiens (Human).